Reading from the N-terminus, the 1368-residue chain is DNA-directed RNA polymerase subunit beta (1368 aa).

Belongs to the RNA polymerase beta chain family. As to quaternary structure, the RNAP catalytic core consists of 2 alpha, 1 beta, 1 beta' and 1 omega subunit. When a sigma factor is associated with the core the holoenzyme is formed, which can initiate transcription.

The catalysed reaction is RNA(n) + a ribonucleoside 5'-triphosphate = RNA(n+1) + diphosphate. Functionally, DNA-dependent RNA polymerase catalyzes the transcription of DNA into RNA using the four ribonucleoside triphosphates as substrates. The chain is DNA-directed RNA polymerase subunit beta from Burkholderia cenocepacia (strain ATCC BAA-245 / DSM 16553 / LMG 16656 / NCTC 13227 / J2315 / CF5610) (Burkholderia cepacia (strain J2315)).